A 51-amino-acid chain; its full sequence is Large ribosomal subunit protein eL39 (51 aa).

Belongs to the eukaryotic ribosomal protein eL39 family.

The polypeptide is Large ribosomal subunit protein eL39 (Methanococcus aeolicus (strain ATCC BAA-1280 / DSM 17508 / OCM 812 / Nankai-3)).